Consider the following 1101-residue polypeptide: Isoleucine--tRNA ligase (1101 aa).

A 'HIGH' region motif is present at residues 50–60; sequence PFANGLPHYGH. The short motif at 629 to 633 is the 'KMSKS' region element; that stretch reads KLSKR. An ATP-binding site is contributed by Lys632.

Belongs to the class-I aminoacyl-tRNA synthetase family. IleS type 2 subfamily. As to quaternary structure, monomer. It depends on Zn(2+) as a cofactor.

The protein resides in the cytoplasm. It catalyses the reaction tRNA(Ile) + L-isoleucine + ATP = L-isoleucyl-tRNA(Ile) + AMP + diphosphate. Functionally, catalyzes the attachment of isoleucine to tRNA(Ile). As IleRS can inadvertently accommodate and process structurally similar amino acids such as valine, to avoid such errors it has two additional distinct tRNA(Ile)-dependent editing activities. One activity is designated as 'pretransfer' editing and involves the hydrolysis of activated Val-AMP. The other activity is designated 'posttransfer' editing and involves deacylation of mischarged Val-tRNA(Ile). The chain is Isoleucine--tRNA ligase from Anaplasma marginale (strain St. Maries).